The primary structure comprises 71 residues: ATP synthase F(0) complex subunit e, mitochondrial (71 aa).

N6-acetyllysine is present on Lys-34. Ser-68 carries the post-translational modification Phosphoserine.

The protein belongs to the ATPase e subunit family. Component of the ATP synthase complex composed at least of ATP5F1A/subunit alpha, ATP5F1B/subunit beta, ATP5MC1/subunit c (homooctomer), MT-ATP6/subunit a, MT-ATP8/subunit 8, ATP5ME/subunit e, ATP5MF/subunit f, ATP5MG/subunit g, ATP5MK/subunit k, ATP5MJ/subunit j, ATP5F1C/subunit gamma, ATP5F1D/subunit delta, ATP5F1E/subunit epsilon, ATP5PF/subunit F6, ATP5PB/subunit b, ATP5PD/subunit d, ATP5PO/subunit OSCP. ATP synthase complex consists of a soluble F(1) head domain (subunits alpha(3) and beta(3)) - the catalytic core - and a membrane F(0) domain - the membrane proton channel (subunits c, a, 8, e, f, g, k and j). These two domains are linked by a central stalk (subunits gamma, delta, and epsilon) rotating inside the F1 region and a stationary peripheral stalk (subunits F6, b, d, and OSCP). In terms of tissue distribution, mammary gland, liver, kidney, heart, spleen, brain and lung.

It is found in the mitochondrion. It localises to the mitochondrion inner membrane. Subunit e, of the mitochondrial membrane ATP synthase complex (F(1)F(0) ATP synthase or Complex V) that produces ATP from ADP in the presence of a proton gradient across the membrane which is generated by electron transport complexes of the respiratory chain. ATP synthase complex consist of a soluble F(1) head domain - the catalytic core - and a membrane F(1) domain - the membrane proton channel. These two domains are linked by a central stalk rotating inside the F(1) region and a stationary peripheral stalk. During catalysis, ATP synthesis in the catalytic domain of F(1) is coupled via a rotary mechanism of the central stalk subunits to proton translocation. In vivo, can only synthesize ATP although its ATP hydrolase activity can be activated artificially in vitro. Part of the complex F(0) domain. This Mus musculus (Mouse) protein is ATP synthase F(0) complex subunit e, mitochondrial.